The following is a 119-amino-acid chain: Large ribosomal subunit protein bL20 (119 aa).

It belongs to the bacterial ribosomal protein bL20 family.

Its function is as follows. Binds directly to 23S ribosomal RNA and is necessary for the in vitro assembly process of the 50S ribosomal subunit. It is not involved in the protein synthesizing functions of that subunit. The protein is Large ribosomal subunit protein bL20 of Nitrosomonas europaea (strain ATCC 19718 / CIP 103999 / KCTC 2705 / NBRC 14298).